A 171-amino-acid polypeptide reads, in one-letter code: Lipoprotein signal peptidase (171 aa).

3 consecutive transmembrane segments (helical) span residues 8 to 28, 64 to 84, and 96 to 118; these read SFLW…YIVV, WQQY…VYFL, and SAYA…NGFV. Catalysis depends on residues Asp-120 and Asp-138. The helical transmembrane segment at 133-153 threads the bilayer; that stretch reads VFNIADIAICIGAGLLALDAF.

It belongs to the peptidase A8 family.

Its subcellular location is the cell inner membrane. The catalysed reaction is Release of signal peptides from bacterial membrane prolipoproteins. Hydrolyzes -Xaa-Yaa-Zaa-|-(S,diacylglyceryl)Cys-, in which Xaa is hydrophobic (preferably Leu), and Yaa (Ala or Ser) and Zaa (Gly or Ala) have small, neutral side chains.. Its pathway is protein modification; lipoprotein biosynthesis (signal peptide cleavage). Its function is as follows. This protein specifically catalyzes the removal of signal peptides from prolipoproteins. The polypeptide is Lipoprotein signal peptidase (Haemophilus influenzae (strain 86-028NP)).